The following is a 469-amino-acid chain: Adenosylhomocysteinase (469 aa).

Residues Thr-63, Asp-139, and Glu-164 each coordinate substrate. 165–167 (TTT) is a binding site for NAD(+). 2 residues coordinate substrate: Lys-194 and Asp-198. NAD(+)-binding positions include Asn-199, 228-233 (GYGDVG), Glu-251, Asn-300, 321-323 (IGH), and Asn-375.

It belongs to the adenosylhomocysteinase family. Requires NAD(+) as cofactor.

The protein resides in the cytoplasm. The catalysed reaction is S-adenosyl-L-homocysteine + H2O = L-homocysteine + adenosine. The protein operates within amino-acid biosynthesis; L-homocysteine biosynthesis; L-homocysteine from S-adenosyl-L-homocysteine: step 1/1. May play a key role in the regulation of the intracellular concentration of adenosylhomocysteine. The chain is Adenosylhomocysteinase from Pseudomonas aeruginosa (strain LESB58).